A 253-amino-acid polypeptide reads, in one-letter code: U2 small nuclear ribonucleoprotein A' (253 aa).

4 LRR repeats span residues Lys19–Lys40, Asp41–Pro62, Arg63–Thr84, and Asn87–Arg108. The 39-residue stretch at Asn121–Leu159 folds into the LRRCT domain. The disordered stretch occupies residues Glu228–Thr253. A compositionally biased stretch (acidic residues) spans Ala241 to Thr253.

This sequence belongs to the U2 small nuclear ribonucleoprotein A family. In terms of assembly, associated with the spliceosome.

The protein localises to the nucleus. Functionally, involved in pre-mRNA splicing. This chain is U2 small nuclear ribonucleoprotein A' (lea1), found in Aspergillus fumigatus (strain ATCC MYA-4609 / CBS 101355 / FGSC A1100 / Af293) (Neosartorya fumigata).